A 244-amino-acid polypeptide reads, in one-letter code: Tetraspanin-7 (244 aa).

The Cytoplasmic portion of the chain corresponds to 1–11; it reads METKPVITCLK. Residues 12–35 form a helical membrane-spanning segment; the sequence is TLLIIYSFVFWITGVILLAVGVWG. The Extracellular segment spans residues 36–51; it reads KLTLGTYISLIAENST. N-linked (GlcNAc...) asparagine glycosylation is present at Asn-49. Residues 52 to 70 traverse the membrane as a helical segment; that stretch reads NAPYVLIGTGTTIVVFGLF. Residues 71–81 lie on the Cytoplasmic side of the membrane; the sequence is GCFATCRGSPW. A helical membrane pass occupies residues 82–107; it reads MLKLYAMFLSLVFLAELVAGISGFVF. Topologically, residues 108 to 208 are extracellular; sequence RHEIKDTFLR…LVTSFMETNM (101 aa). N-linked (GlcNAc...) asparagine glycosylation is found at Asn-150, Asn-153, Asn-172, and Asn-183. Residues 209-229 form a helical membrane-spanning segment; that stretch reads GIIAGVAFGIAFSQLIGMLLA. At 230–244 the chain is on the cytoplasmic side; sequence CCLSRFITANQYEMV.

It belongs to the tetraspanin (TM4SF) family.

The protein localises to the membrane. May be involved in cell proliferation and cell motility. The chain is Tetraspanin-7 (TSPAN7) from Pan troglodytes (Chimpanzee).